Consider the following 429-residue polypeptide: Histidine--tRNA ligase (429 aa).

This sequence belongs to the class-II aminoacyl-tRNA synthetase family. Homodimer.

It localises to the cytoplasm. The enzyme catalyses tRNA(His) + L-histidine + ATP = L-histidyl-tRNA(His) + AMP + diphosphate + H(+). The protein is Histidine--tRNA ligase of Pseudomonas syringae pv. tomato (strain ATCC BAA-871 / DC3000).